The sequence spans 48 residues: Large ribosomal subunit protein bL32 (48 aa).

Over residues Met1–Tyr20 the composition is skewed to basic residues. The tract at residues Met1–Tyr48 is disordered.

The protein belongs to the bacterial ribosomal protein bL32 family.

The chain is Large ribosomal subunit protein bL32 from Campylobacter hominis (strain ATCC BAA-381 / DSM 21671 / CCUG 45161 / LMG 19568 / NCTC 13146 / CH001A).